Reading from the N-terminus, the 658-residue chain is Biosynthetic arginine decarboxylase (658 aa).

Residue Lys127 is modified to N6-(pyridoxal phosphate)lysine. 307 to 317 serves as a coordination point for substrate; it reads FDVGGGLGVDY.

The protein belongs to the Orn/Lys/Arg decarboxylase class-II family. SpeA subfamily. As to quaternary structure, homotetramer. The cofactor is pyridoxal 5'-phosphate. It depends on Mg(2+) as a cofactor. Post-translationally, processed post-translationally to a 70 kDa mature form. The N-terminus is blocked.

Its subcellular location is the periplasm. The catalysed reaction is L-arginine + H(+) = agmatine + CO2. It functions in the pathway amine and polyamine biosynthesis; agmatine biosynthesis; agmatine from L-arginine: step 1/1. With respect to regulation, down-regulated by polyamine end products putrescine and spermidine. Functionally, catalyzes the biosynthesis of agmatine from arginine. The polypeptide is Biosynthetic arginine decarboxylase (speA) (Escherichia coli (strain K12)).